A 101-amino-acid chain; its full sequence is MAHNHDHDHEHEVITLVDEQGNESLFEILLTIDGKEEFGKNYVLLVPAGSEEDEAGEIEIQAYSFTENEDGTEGDLQPIPEDSDAEWDMIEEVFNSFLDEE.

It belongs to the UPF0473 family.

The chain is UPF0473 protein SUB1774 from Streptococcus uberis (strain ATCC BAA-854 / 0140J).